The following is a 174-amino-acid chain: Photosystem II repair protein PSB27-H1, chloroplastic (174 aa).

A disordered region spans residues Met-1–Arg-35. Position 94 is a phosphothreonine (Thr-94). A Phosphotyrosine modification is found at Tyr-132.

It belongs to the Psb27 family.

The protein localises to the plastid. Its subcellular location is the chloroplast thylakoid membrane. In terms of biological role, probably involved in repair of photodamaged photosystem II (PSII). In Arabidopsis thaliana (Mouse-ear cress), this protein is Photosystem II repair protein PSB27-H1, chloroplastic (PSB27-1).